A 224-amino-acid polypeptide reads, in one-letter code: LexA repressor (224 aa).

The H-T-H motif DNA-binding region spans 38–58; sequence IREIGDAVGLTSTSSVAHQLR. Basic and acidic residues predominate over residues 71-82; sequence NRPRAVDVRGID. The interval 71 to 96 is disordered; that stretch reads NRPRAVDVRGIDDAGTPSATTDVIGS. Active-site for autocatalytic cleavage activity residues include Ser148 and Lys185.

This sequence belongs to the peptidase S24 family. Homodimer.

It catalyses the reaction Hydrolysis of Ala-|-Gly bond in repressor LexA.. Represses a number of genes involved in the response to DNA damage (SOS response), including recA and lexA. In the presence of single-stranded DNA, RecA interacts with LexA causing an autocatalytic cleavage which disrupts the DNA-binding part of LexA, leading to derepression of the SOS regulon and eventually DNA repair. This chain is LexA repressor, found in Mycobacteroides abscessus (strain ATCC 19977 / DSM 44196 / CCUG 20993 / CIP 104536 / JCM 13569 / NCTC 13031 / TMC 1543 / L948) (Mycobacterium abscessus).